Here is a 126-residue protein sequence, read N- to C-terminus: uncharacterized protein (126 aa).

A run of 2 helical transmembrane segments spans residues 40–57 and 72–94; these read IDKWILGALAFVFAVSFF and ILIAIGIFATFEIAIILAVILGG.

It is found in the cell membrane. This is an uncharacterized protein from Pasteurella multocida (strain Pm70).